The primary structure comprises 228 residues: N-acylneuraminate cytidylyltransferase (228 aa).

Belongs to the CMP-NeuNAc synthase family.

Its subcellular location is the cytoplasm. It carries out the reaction an N-acylneuraminate + CTP = a CMP-N-acyl-beta-neuraminate + diphosphate. The polypeptide is N-acylneuraminate cytidylyltransferase (neuA) (Neisseria meningitidis serogroup B (strain ATCC BAA-335 / MC58)).